Reading from the N-terminus, the 32-residue chain is Dermaseptin-8 (32 aa).

Gln32 bears the Glutamine amide mark.

Expressed by the skin glands.

It localises to the secreted. Antimicrobial peptide, active against the Gram-positive bacterium S.aureus, and the Gram-negative bacteriun E.coli. Has hemolytic activity at 432 uM. The polypeptide is Dermaseptin-8 (Phyllomedusa tarsius (Brownbelly leaf frog)).